Here is a 142-residue protein sequence, read N- to C-terminus: Hemoglobin subunit alpha (142 aa).

An N-acetylserine modification is found at S1. The 142-residue stretch at 1–142 (SLSDKDKAAV…VALALAERYR (142 aa)) folds into the Globin domain. H59 is a binding site for O2. Heme b is bound at residue H88.

The protein belongs to the globin family. Hb1 is a heterotetramer of two alpha chains and two beta-1 chains, while Hb2 is a heterotetramer of two alpha chains and two beta-2 chains. Red blood cells.

Its function is as follows. Involved in oxygen transport from gills to the various peripheral tissues. This is Hemoglobin subunit alpha (hba) from Cygnodraco mawsoni (Antarctic dragonfish).